A 305-amino-acid polypeptide reads, in one-letter code: N-acetylneuraminate lyase (305 aa).

The aceneuramate site is built by T51 and T52. Catalysis depends on Y143, which acts as the Proton donor. The active-site Schiff-base intermediate with substrate is the K173. Aceneuramate contacts are provided by T175, G197, D199, E200, and S216.

It belongs to the DapA family. NanA subfamily. Homotetramer.

Its subcellular location is the cytoplasm. The catalysed reaction is aceneuramate = aldehydo-N-acetyl-D-mannosamine + pyruvate. The protein operates within amino-sugar metabolism; N-acetylneuraminate degradation. Functionally, catalyzes the cleavage of N-acetylneuraminic acid (sialic acid) to form pyruvate and N-acetylmannosamine via a Schiff base intermediate. It prevents sialic acids from being recycled and returning to the cell surface. Involved in the N-glycolylneuraminic acid (Neu5Gc) degradation pathway. This Xenopus tropicalis (Western clawed frog) protein is N-acetylneuraminate lyase.